Here is a 91-residue protein sequence, read N- to C-terminus: Small ribosomal subunit protein uS19 (91 aa).

The protein belongs to the universal ribosomal protein uS19 family.

Its function is as follows. Protein S19 forms a complex with S13 that binds strongly to the 16S ribosomal RNA. The polypeptide is Small ribosomal subunit protein uS19 (Bordetella petrii (strain ATCC BAA-461 / DSM 12804 / CCUG 43448)).